Here is a 78-residue protein sequence, read N- to C-terminus: MSRVCQVTGKRVQTGNNVSHANNKTRRRFLPNLHKRRFWVASENRWVKLRVSTCAVRTIDKNGIDAVLAELRASGEKV.

Belongs to the bacterial ribosomal protein bL28 family.

This is Large ribosomal subunit protein bL28 (rpmB) from Xylella fastidiosa (strain 9a5c).